The chain runs to 207 residues: CASP-like protein 1D1 (207 aa).

Residues 1-40 lie on the Cytoplasmic side of the membrane; the sequence is MATVDGTTAPSSGGKTATVALESGGGRYGGPAPAKCSGAN. Residues 41 to 61 traverse the membrane as a helical segment; sequence LALRALLFAVSLSALVVLVTA. Topologically, residues 62–89 are extracellular; sequence KQTVMVPFVIRPPQFILAPVPAKYTHSP. Residues 90–110 traverse the membrane as a helical segment; that stretch reads ALIYLLAALCATCFYSLITAI. Residues 111–124 are Cytoplasmic-facing; the sequence is SSVRLLSSSACSAK. Residues 125 to 145 traverse the membrane as a helical segment; sequence TLFYLILLDVFYAAVMASATG. The Extracellular segment spans residues 146–176; the sequence is TAGAVAWVGLKGNSHTRWNKICNVYGKFCRH. A helical membrane pass occupies residues 177 to 197; it reads IGSSTFLALIAAIVLVLLAFL. Over 198-207 the chain is Cytoplasmic; it reads NAYSLYRRSR.

The protein belongs to the Casparian strip membrane proteins (CASP) family. In terms of assembly, homodimer and heterodimers.

The protein localises to the cell membrane. In Oryza sativa subsp. japonica (Rice), this protein is CASP-like protein 1D1.